A 193-amino-acid chain; its full sequence is Thymidine kinase (193 aa).

ATP is bound by residues 9–16 (ASMNAGKS) and 87–90 (DEAQ). Glu88 serves as the catalytic Proton acceptor. Residues Cys145, Cys147, Cys182, and His185 each coordinate Zn(2+).

Belongs to the thymidine kinase family. Homotetramer.

It is found in the cytoplasm. It catalyses the reaction thymidine + ATP = dTMP + ADP + H(+). The polypeptide is Thymidine kinase (Zymomonas mobilis subsp. mobilis (strain ATCC 31821 / ZM4 / CP4)).